The sequence spans 210 residues: Protein SgcE (210 aa).

Ser-6 is a binding site for substrate. Residues His-31, Asp-33, and His-64 each coordinate a divalent metal cation. Catalysis depends on Asp-33, which acts as the Proton acceptor. Residues His-64, 140–143, 169–171, and 191–192 each bind substrate; these read DGQG, DGG, and GR. Residue Asp-169 coordinates a divalent metal cation. Asp-169 acts as the Proton donor in catalysis.

The protein belongs to the ribulose-phosphate 3-epimerase family. Requires Co(2+) as cofactor. The cofactor is Fe(2+). Mn(2+) serves as cofactor. It depends on Zn(2+) as a cofactor.

Its pathway is carbohydrate degradation. Its function is as follows. Probable pentose-5-phosphate 3-epimerase. The polypeptide is Protein SgcE (sgcE) (Escherichia coli (strain K12)).